Consider the following 1394-residue polypeptide: Cyclic nucleotide-gated channel beta-1 (1394 aa).

3 disordered regions span residues 1-95, 112-253, and 271-675; these read MLGW…AHSS, VPQP…QDSA, and VIRG…SQNS. Topologically, residues 1–762 are cytoplasmic; it reads MLGWVQRVLP…WKKYQFPQSI (762 aa). 2 stretches are compositionally biased toward polar residues: residues 68 to 86 and 116 to 125; these read PQGTQETALTPPTSLQAQV and AHSSRPSQNI. Composition is skewed to basic and acidic residues over residues 300–312 and 336–355; these read EESHLILEEVDPH and DEEKGKVVEQTPRELPRIQE. Acidic residues predominate over residues 356-387; the sequence is EKEDEEEEKEDGEEEEEEGREKEEEEGEEKEE. Positions 388 to 408 are enriched in basic and acidic residues; sequence EEGREKEEEEGEKKEEEGREK. Residues 409-418 show a composition bias toward acidic residues; sequence EEEEGGEKED. The span at 419–433 shows a compositional bias: basic and acidic residues; it reads EEGREKEEEEGRGKE. Composition is skewed to acidic residues over residues 452–464 and 481–490; these read EGREEEEDEEEEQ and DRSEESETQD. Low complexity-rich tracts occupy residues 493–508 and 529–554; these read EVGGAQAQGEVGGAQA and EVGGAQAQGEVGGAQEQDGVGGAQDQ. Polar residues predominate over residues 654–675; sequence DPTSPQGTDDQDRATSTASQNS. Residues 671–681 are calmodulin-binding CaM1; that stretch reads ASQNSAIINDR. The short motif at 682-692 is the IQ-like element; that stretch reads LQELVKLFKER. The interval 699–732 is disordered; sequence KLIDPDVTSDEESPKPSPAKKAPEPAPEVKPAEA. A helical membrane pass occupies residues 763 to 793; it reads DPLTNLMYILWLFFVVLAWNWNCWLIPVRWA. Over 794-798 the chain is Extracellular; the sequence is FPYQT. Residues 799 to 825 form a helical membrane-spanning segment; that stretch reads PDNIHLWLLMDYLCDLIYLLDITVFQM. Residues 826–837 lie on the Cytoplasmic side of the membrane; the sequence is RLQFVRGGDIIT. Residues 838-861 form a helical membrane-spanning segment; it reads DKKEMRNNYVKSQRFKMDMLCLLP. Residues 862–872 lie on the Extracellular side of the membrane; sequence LDLLYLKFGVN. A helical membrane pass occupies residues 873 to 887; sequence PLLRLPRCLKYMAFF. At 888 to 900 the chain is on the cytoplasmic side; sequence EFNNRLESILSKA. The tract at residues 900-999 is ion conduction pathway; that stretch reads AYVYRVIRTT…IGQMRDVVGA (100 aa). Residues 901–922 traverse the membrane as a helical segment; it reads YVYRVIRTTAYLLYSLHLNSCL. The Extracellular segment spans residues 923 to 931; that stretch reads YYWASAYEG. The next 2 helical transmembrane spans lie at 932 to 974 and 975 to 1002; these read LGST…EIVF and QGLNYFTGVFAFSVMIGQMRDVVGAATA. The segment at 959-962 is selectivity filter; sequence TIGG. At 1003–1394 the chain is on the cytoplasmic side; the sequence is GQTYYRSCMD…EEARKEKEEE (392 aa). The segment at 1082 to 1198 is cyclic nucleotide-binding domain; that stretch reads RQMIFDMLKR…LLRKKARRML (117 aa). 3',5'-cyclic GMP-binding residues include glycine 1143, glutamate 1144, serine 1146, arginine 1156, and threonine 1157. A 3',5'-cyclic AMP-binding site is contributed by arginine 1156. Positions 1261–1267 are calmodulin-binding CaM2; that stretch reads QQQLLEQ. The tract at residues 1265–1394 is disordered; that stretch reads LEQAKSSEDA…EEARKEKEEE (130 aa). Over residues 1285-1326 the composition is skewed to pro residues; that stretch reads EQPPRPEPPAPEAPAPEPTAPEPLAPEAPAPEAPAPSSPPPA. 2 stretches are compositionally biased toward basic and acidic residues: residues 1329–1345 and 1364–1376; these read ERPEGDKDAARPEEHPV and VPEKQEEKEKKEE.

The protein belongs to the cyclic nucleotide-gated cation channel (TC 1.A.1.5) family. CNGB1 subfamily. In terms of assembly, the rod cyclic nucleotide-gated channel is a heterotetramer composed of CNGA1 and CNGB1 subunits with 3:1 stoichiometry. CNGA1:CNGB1 channel binds Ca(2+)-bound CALM1 via CaM1 and CaM2 regions of the CNGB1 subunit; this interaction modulates the affinity of the channel for cNMPs in response to intracellular Ca(2+) levels. The olfactory cyclic nucleotide-gated channel is a heterotetramer composed of CNGA2, CNGA4 and CNGB1 subunits with 2:1:1 stoichiometry. As to expression, retina, testis, kidney, heart and brain.

Its subcellular location is the membrane. It catalyses the reaction Ca(2+)(in) = Ca(2+)(out). It carries out the reaction Na(+)(in) = Na(+)(out). The catalysed reaction is K(+)(in) = K(+)(out). The enzyme catalyses NH4(+)(in) = NH4(+)(out). It catalyses the reaction Rb(+)(in) = Rb(+)(out). It carries out the reaction Li(+)(in) = Li(+)(out). The catalysed reaction is Cs(+)(in) = Cs(+)(out). Its function is as follows. Pore-forming subunit of the rod cyclic nucleotide-gated channel. Mediates rod photoresponses at dim light converting transient changes in intracellular cGMP levels into electrical signals. In the dark, cGMP levels are high and keep the channel open enabling a steady inward current carried by Na(+) and Ca(2+) ions that leads to membrane depolarization and neurotransmitter release from synaptic terminals. Upon photon absorption cGMP levels decline leading to channel closure and membrane hyperpolarization that ultimately slows neurotransmitter release and signals the presence of light, the end point of the phototransduction cascade. Pore-forming subunit of the olfactory cyclic nucleotide-gated channel. Operates in the cilia of olfactory sensory neurons where chemical stimulation of the odorant is converted to an electrical signal. Mediates odorant-induced cAMP-dependent Ca(2+) influx triggering neuron depolarization. The rise of intracellular Ca(2+) levels potentiates the olfactory response by activating Ca(2+)-dependent Cl(-) channels, but it also serves as a negative feedback signal to desensitize the channel for rapid adaptation to odorants. Conducts cGMP- and cAMP-gated ion currents, with permeability for monovalent and divalent cations. The selectivity for Ca(2+) over Na(+) increases with cGMP concentrations, whereas the selectivity among monovalent ions is independent of the cGMP levels. In Bos taurus (Bovine), this protein is Cyclic nucleotide-gated channel beta-1.